We begin with the raw amino-acid sequence, 335 residues long: Adenine deaminase (335 aa).

Residues histidine 17, histidine 19, and histidine 197 each contribute to the Zn(2+) site. The active-site Proton donor is the glutamate 200. Aspartate 278 contacts Zn(2+). A substrate-binding site is contributed by aspartate 279.

This sequence belongs to the metallo-dependent hydrolases superfamily. Adenosine and AMP deaminases family. Adenine deaminase type 2 subfamily. Zn(2+) is required as a cofactor.

The enzyme catalyses adenine + H2O + H(+) = hypoxanthine + NH4(+). Functionally, catalyzes the hydrolytic deamination of adenine to hypoxanthine. Plays an important role in the purine salvage pathway and in nitrogen catabolism. The protein is Adenine deaminase of Marinomonas sp. (strain MWYL1).